The sequence spans 604 residues: Beta-(1--&gt;2)glucan export ATP-binding/permease protein NdvA (604 aa).

One can recognise an ABC transmembrane type-1 domain in the interval 21 to 311 (GWILAFANLL…VVSFINSVFM (291 aa)). Transmembrane regions (helical) follow at residues 22–42 (WILAFANLLLAGAQFAEPVLF), 68–88 (LLGAWVAFGLFTILCSAAVAL), 146–166 (EHFAAILSLVVLLPLALYINW), 168–188 (LAILLFILCVVFTVLTTLVVH), 238–258 (LLALQMPVLSWWALVTVITRA), and 285–305 (IVMFVSFATLLIQKLEQVVSF). Positions 345 to 579 (VEFKDVSFSY…QGHFAALARA (235 aa)) constitute an ABC transporter domain. 378 to 385 (GATGAGKS) lines the ATP pocket.

Belongs to the ABC transporter superfamily. Beta-(1--&gt;2)glucan exporter (TC 3.A.1.108.1) family. In terms of assembly, homodimer.

Its subcellular location is the cell inner membrane. It carries out the reaction [(1-&gt;2)-beta-D-glucosyl](n)(in) + ATP + H2O = [(1-&gt;2)-beta-D-glucosyl](n)(out) + ADP + phosphate + H(+). Its function is as follows. Involved in beta-(1--&gt;2)glucan export. Transmembrane domains (TMD) form a pore in the inner membrane and the ATP-binding domain (NBD) is responsible for energy generation. The polypeptide is Beta-(1--&gt;2)glucan export ATP-binding/permease protein NdvA (Rhodopseudomonas palustris (strain BisB18)).